A 433-amino-acid chain; its full sequence is D-amino acid dehydrogenase (433 aa).

3–17 (IVVLGAGVLGVTSAW) contributes to the FAD binding site.

Belongs to the DadA oxidoreductase family. It depends on FAD as a cofactor.

The enzyme catalyses a D-alpha-amino acid + A + H2O = a 2-oxocarboxylate + AH2 + NH4(+). Its pathway is amino-acid degradation; D-alanine degradation; NH(3) and pyruvate from D-alanine: step 1/1. Its function is as follows. Oxidative deamination of D-amino acids. This chain is D-amino acid dehydrogenase, found in Paracoccus denitrificans (strain Pd 1222).